Consider the following 841-residue polypeptide: Rhomboid-like protease 5 (841 aa).

The segment covering 1–10 (MSSKGGSSRL) has biased composition (low complexity). The interval 1–289 (MSSKGGSSRL…GGDGGPRRHS (289 aa)) is disordered. Residues 11-51 (GSKDLKKMTSRTERELRDSGRVRGEVERVEKRLRATAKVKE) show a composition bias toward basic and acidic residues. Low complexity predominate over residues 95–132 (LRPASSSPRLASSSRPTESTLPSSSSRALQGASSSSSS). Basic and acidic residues-rich tracts occupy residues 154–163 (LRQEKKRLPE), 209–230 (RTAE…RGSV), and 243–275 (SSHE…RSGD). 6 helical membrane-spanning segments follow: residues 323–343 (FLMI…ELVL), 464–484 (MFRV…LLNV), 492–512 (WILE…VGGV), 526–546 (VTVG…PFSI), 571–590 (FGNM…GGLI), and 673–693 (FAAA…LLVP). Residue S531 is the Nucleophile of the active site. H585 is an active-site residue.

Belongs to the peptidase S54 family.

Its subcellular location is the membrane. The enzyme catalyses Cleaves type-1 transmembrane domains using a catalytic dyad composed of serine and histidine that are contributed by different transmembrane domains.. Functionally, serine protease involved in intramembrane proteolysis. Cleaves microneme adhesins, such as MIC2. This step is essential for efficient invasion of host cells. Catalyzes intramembrane proteolysis of AMA1. The chain is Rhomboid-like protease 5 (ROM5) from Toxoplasma gondii.